We begin with the raw amino-acid sequence, 74 residues long: RNA-binding protein Hfq (74 aa).

One can recognise a Sm domain in the interval 9-69 (DQYLNQLRKN…ISTFSPVKNV (61 aa)).

The protein belongs to the Hfq family. Homohexamer.

Its function is as follows. RNA chaperone that binds small regulatory RNA (sRNAs) and mRNAs to facilitate mRNA translational regulation in response to envelope stress, environmental stress and changes in metabolite concentrations. Also binds with high specificity to tRNAs. In Oceanobacillus iheyensis (strain DSM 14371 / CIP 107618 / JCM 11309 / KCTC 3954 / HTE831), this protein is RNA-binding protein Hfq.